An 823-amino-acid chain; its full sequence is Probable inorganic carbon transporter subunit DabA (823 aa).

4 residues coordinate Zn(2+): Cys361, Asp363, His527, and Cys542.

This sequence belongs to the inorganic carbon transporter (TC 9.A.2) DabA family. As to quaternary structure, forms a complex with DabB. Zn(2+) serves as cofactor.

It is found in the cell inner membrane. Its activity is regulated as follows. Intracellular DIC accumulation is sensitive to CCCP (carbonyl cyanide-m-chlorophenylhydrazone) and DCCD (N,N-dicyclohexylcarbodiimide) and therefore likely driven by either proton potential, ATP, or both. Part of an energy-coupled inorganic carbon pump. In terms of biological role, probably involved in transport of dissolved inorganic carbon (DIC) with upstream gene dabB (Tcr_0853); has been suggested to be a proton-DIC symporter. The protein is Probable inorganic carbon transporter subunit DabA of Hydrogenovibrio crunogenus (strain DSM 25203 / XCL-2) (Thiomicrospira crunogena).